Consider the following 168-residue polypeptide: Calcium-binding protein 2 (168 aa).

EF-hand domains are found at residues 13-48 (GMEKDLESLFKKYDSDRNGKITYIEIVETLRKAGKK), 48-83 (KNPERIADLLFRDDTDKNGELTIEEAKLRIVRMNDE), 88-123 (VLNWDVEKFINDNDKDGDRKITRDEVLQRFTEQGAE), and 124-159 (DPELITDSIFRQMDLDRDGVITCDEIKEFNRKKKFS). 19 residues coordinate Ca(2+): Asp26, Asp28, Asn30, Lys32, Glu37, Asp61, Asp63, Asn65, Glu67, Glu72, Asp101, Asp103, Asp105, Lys107, Glu112, Asp137, Asp139, Asp141, and Glu148.

Not known; probably binds four calcium ions. This Dictyostelium discoideum (Social amoeba) protein is Calcium-binding protein 2 (cbp2).